We begin with the raw amino-acid sequence, 957 residues long: Glycine dehydrogenase (decarboxylating) (957 aa).

Lys-708 carries the N6-(pyridoxal phosphate)lysine modification.

It belongs to the GcvP family. As to quaternary structure, the glycine cleavage system is composed of four proteins: P, T, L and H. Pyridoxal 5'-phosphate is required as a cofactor.

The enzyme catalyses N(6)-[(R)-lipoyl]-L-lysyl-[glycine-cleavage complex H protein] + glycine + H(+) = N(6)-[(R)-S(8)-aminomethyldihydrolipoyl]-L-lysyl-[glycine-cleavage complex H protein] + CO2. In terms of biological role, the glycine cleavage system catalyzes the degradation of glycine. The P protein binds the alpha-amino group of glycine through its pyridoxal phosphate cofactor; CO(2) is released and the remaining methylamine moiety is then transferred to the lipoamide cofactor of the H protein. In Klebsiella pneumoniae subsp. pneumoniae (strain ATCC 700721 / MGH 78578), this protein is Glycine dehydrogenase (decarboxylating).